Consider the following 91-residue polypeptide: Small ribosomal subunit protein uS17 (91 aa).

Belongs to the universal ribosomal protein uS17 family. Part of the 30S ribosomal subunit.

In terms of biological role, one of the primary rRNA binding proteins, it binds specifically to the 5'-end of 16S ribosomal RNA. In Malacoplasma penetrans (strain HF-2) (Mycoplasma penetrans), this protein is Small ribosomal subunit protein uS17.